Here is a 561-residue protein sequence, read N- to C-terminus: Sesquiterpene synthase TPS2 (561 aa).

Residues 6–26 (ANGHSDVPSTQPPIGKQKKEI) form a disordered region. Positions 277, 314, 318, 455, and 458 each coordinate (2E,6E)-farnesyl diphosphate. 2 residues coordinate Mg(2+): Asp-314 and Asp-318. Residues 314-318 (DDTYD) carry the DDXXD motif motif. The Mg(2+) site is built by Asp-458, Ser-462, and Glu-466.

The protein belongs to the terpene synthase family. Tpsa subfamily. In terms of assembly, monomer. Requires Mg(2+) as cofactor.

Its subcellular location is the cytoplasm. It carries out the reaction (2E,6E)-farnesyl diphosphate = beta-ylangene + diphosphate. The catalysed reaction is (2E,6E)-farnesyl diphosphate = beta-copaene + diphosphate. The enzyme catalyses (2E,6E)-farnesyl diphosphate = beta-cubebene + diphosphate. It participates in secondary metabolite biosynthesis; terpenoid biosynthesis. Functionally, sesquiterpene synthase involved in the biosynthesis of volatile organic compounds. Mediates the conversion of (2E,6E)-farnesyl diphosphate (FPP) into beta-ylangene, beta-copaene and beta-cubebene. Does not use (2E)-geranyl diphosphate (GPP) as substrate. This Cananga odorata (Ylang-ylang tree) protein is Sesquiterpene synthase TPS2.